The following is a 410-amino-acid chain: MNFDNLEREDEQIAHLVQKEKERQENSIELIASENFVSKAVMEAMGSYLTNKYAEGYPSKRYYGGCHVVDEVEDLARERVKKLFGAEHANVQPHSGSQANMAVYFSILEPGDTVLGMDLSHGGHLTHGSSVNFSGRLFNFVSYGVDKETETINYETVRELALKHKPKLIVAGASAYSRIIDFKTLREIADEVGAYLMVDIAHIAGLVATGLHPSPVPYADFVTSTTHKTLRGPRGGLILCKEKFAKVLDKNIFPGIQGGPLMHIIAAKAVCFKEALEPSFKTYMEQVVKNAHVLAEALEAYGFKLVSNGTDNHLILVDLTNKDITGKDAEILLDSIGITLNKNTVPNETRSPFVTSGVRIGTPAITTRGFKEEEMKEIASIINDAIKEKDGDLEPLKARVKALCAKYPLY.

Residues L119 and 123–125 (GHL) contribute to the (6S)-5,6,7,8-tetrahydrofolate site. K228 bears the N6-(pyridoxal phosphate)lysine mark. Residue 351 to 353 (SPF) participates in (6S)-5,6,7,8-tetrahydrofolate binding.

It belongs to the SHMT family. Homodimer. Pyridoxal 5'-phosphate serves as cofactor.

It localises to the cytoplasm. The catalysed reaction is (6R)-5,10-methylene-5,6,7,8-tetrahydrofolate + glycine + H2O = (6S)-5,6,7,8-tetrahydrofolate + L-serine. The protein operates within one-carbon metabolism; tetrahydrofolate interconversion. Its pathway is amino-acid biosynthesis; glycine biosynthesis; glycine from L-serine: step 1/1. Catalyzes the reversible interconversion of serine and glycine with tetrahydrofolate (THF) serving as the one-carbon carrier. This reaction serves as the major source of one-carbon groups required for the biosynthesis of purines, thymidylate, methionine, and other important biomolecules. Also exhibits THF-independent aldolase activity toward beta-hydroxyamino acids, producing glycine and aldehydes, via a retro-aldol mechanism. The protein is Serine hydroxymethyltransferase of Clostridium perfringens (strain 13 / Type A).